The sequence spans 282 residues: Pantothenate synthetase (282 aa).

26 to 33 contributes to the ATP binding site; it reads MGNLHDGH. The active-site Proton donor is His-33. Gln-57 contacts (R)-pantoate. Position 57 (Gln-57) interacts with beta-alanine. 148–151 serves as a coordination point for ATP; sequence GKKD. Residue Gln-154 participates in (R)-pantoate binding. 185–188 provides a ligand contact to ATP; that stretch reads LSSR.

Belongs to the pantothenate synthetase family. In terms of assembly, homodimer.

Its subcellular location is the cytoplasm. The catalysed reaction is (R)-pantoate + beta-alanine + ATP = (R)-pantothenate + AMP + diphosphate + H(+). The protein operates within cofactor biosynthesis; (R)-pantothenate biosynthesis; (R)-pantothenate from (R)-pantoate and beta-alanine: step 1/1. Catalyzes the condensation of pantoate with beta-alanine in an ATP-dependent reaction via a pantoyl-adenylate intermediate. In Polaromonas sp. (strain JS666 / ATCC BAA-500), this protein is Pantothenate synthetase.